The chain runs to 159 residues: Eukaryotic translation initiation factor 5A-4 (159 aa).

Positions 1–12 (MSDEEHQFESKA) are enriched in basic and acidic residues. The tract at residues 1–21 (MSDEEHQFESKADAGASKTYP) is disordered. Hypusine is present on lysine 52.

Belongs to the eIF-5A family. In terms of processing, lys-52 undergoes hypusination, a unique post-translational modification that consists in the addition of a butylamino group from spermidine to lysine side chain, leading to the formation of the unusual amino acid hypusine. eIF-5As are the only known proteins to undergo this modification, which is essential for their function.

Its function is as follows. Translation factor that promotes translation elongation and termination, particularly upon ribosome stalling at specific amino acid sequence contexts. Binds between the exit (E) and peptidyl (P) site of the ribosome and promotes rescue of stalled ribosome: specifically required for efficient translation of polyproline-containing peptides as well as other motifs that stall the ribosome. Acts as a ribosome quality control (RQC) cofactor by joining the RQC complex to facilitate peptidyl transfer during CAT tailing step. This is Eukaryotic translation initiation factor 5A-4 (EIF5A4) from Solanum tuberosum (Potato).